The following is a 478-amino-acid chain: Adenosylhomocysteinase (478 aa).

Residues threonine 57, aspartate 139, and glutamate 201 each coordinate substrate. 202 to 204 serves as a coordination point for NAD(+); it reads TTT. Positions 231 and 235 each coordinate substrate. NAD(+)-binding positions include asparagine 236, 265–270, glutamate 288, asparagine 323, 344–346, and asparagine 392; these read GYGDVG and IGH.

It belongs to the adenosylhomocysteinase family. The cofactor is NAD(+).

The protein localises to the cytoplasm. It carries out the reaction S-adenosyl-L-homocysteine + H2O = L-homocysteine + adenosine. It functions in the pathway amino-acid biosynthesis; L-homocysteine biosynthesis; L-homocysteine from S-adenosyl-L-homocysteine: step 1/1. Its function is as follows. May play a key role in the regulation of the intracellular concentration of adenosylhomocysteine. In Corynebacterium glutamicum (strain R), this protein is Adenosylhomocysteinase.